Reading from the N-terminus, the 514-residue chain is Voltage-gated potassium channel regulatory subunit KCNG1 (514 aa).

The Cytoplasmic segment spans residues 1-224; it reads MTLLPGDNSH…DMVERPHSGL (224 aa). Residues 180-196 show a composition bias toward acidic residues; it reads MEREEEEEPLDSEDQES. The interval 180–205 is disordered; the sequence is MEREEEEEPLDSEDQESEGPSASEGR. Residues 225–246 traverse the membrane as a helical segment; sequence PGKVFACLSVLFVTVTAVNLSV. Topologically, residues 247–267 are extracellular; that stretch reads STLPSLREEEEQGQCSQMCHN. A helical transmembrane segment spans residues 268–289; that stretch reads VFIVESVCVGWFSLEFLLRFIQ. At 290–300 the chain is on the cytoplasmic side; the sequence is APSKFAFLRSP. The chain crosses the membrane as a helical span at residues 301 to 321; that stretch reads LTLIDLVAILPYYVTLLVDGA. Residues 322–338 are Extracellular-facing; sequence ASSRRKPSTGNSYLDKV. The helical; Voltage-sensor transmembrane segment at 339–359 threads the bilayer; sequence GLVLRVLRALRILYVMRLARH. Over 360-374 the chain is Cytoplasmic; sequence SLGLQTLGLTARRCT. Residues 375–396 traverse the membrane as a helical segment; sequence REFGLLLLFLCVAIALFAPLLY. Topologically, residues 397–411 are extracellular; the sequence is VIENEMADSPEFTSI. Residues 412–423 constitute an intramembrane region (helical); the sequence is PACYWWAVITMT. Residues 424–429 carry the Selectivity filter motif; that stretch reads TVGYGD. Residues 424–431 lie within the membrane without spanning it; that stretch reads TVGYGDMV. Residues 432 to 438 lie on the Extracellular side of the membrane; the sequence is PRSTPGQ. Residues 439–467 form a helical membrane-spanning segment; it reads VVALSSILSGILLMAFPVTSIFHTFSRSY. At 468-514 the chain is on the cytoplasmic side; that stretch reads LELKQEQERVLIRRAQYLIKTKSQLSGMSQDSDILFGSASSDTRDNN.

The protein belongs to the potassium channel family. G (TC 1.A.1.2) subfamily. Kv6.1/KCNG1 sub-subfamily. In terms of assembly, heterotetramer with KCNB1 or KCNB2.

It localises to the cell membrane. Functionally, regulatory alpha-subunit of the voltage-gated potassium (Kv) channel which, when coassembled with KCNB1 or KCNB2, can modulate their expression and their gating kinetics by acting on deactivation upon repolarization and inactivation during maintained depolarization. Potassium channel subunit that does not form functional channels by itself. The sequence is that of Voltage-gated potassium channel regulatory subunit KCNG1 from Mus musculus (Mouse).